Consider the following 180-residue polypeptide: Centromere protein M (180 aa).

As to quaternary structure, component of the CENPA-NAC complex, at least composed of CENPA, CENPC, CENPH, CENPM, CENPN, CENPT and CENPU. The CENPA-NAC complex interacts with the CENPA-CAD complex, composed of CENPI, CENPK, CENPL, CENPO, CENPP, CENPQ, CENPR and CENPS. In terms of tissue distribution, isoform 3 is highly expressed in spleen, and intermediately in heart, prostate and ovary. Isoform 3 is highly expressed in resting CD19 B-cells and B-lineage chronic lymphocytic leukemia (B-CLL) cells and weakly expressed in activated B-cells. Isoform 1 is selectively expressed in activated CD19 cells and weakly in resting CD19 B-cells.

Its subcellular location is the nucleus. It localises to the cytoplasm. The protein localises to the chromosome. It is found in the centromere. The protein resides in the kinetochore. Functionally, component of the CENPA-NAC (nucleosome-associated) complex, a complex that plays a central role in assembly of kinetochore proteins, mitotic progression and chromosome segregation. The CENPA-NAC complex recruits the CENPA-CAD (nucleosome distal) complex and may be involved in incorporation of newly synthesized CENPA into centromeres. The polypeptide is Centromere protein M (CENPM) (Homo sapiens (Human)).